The primary structure comprises 645 residues: 1-phosphatidylinositol 4,5-bisphosphate phosphodiesterase zeta-1 (645 aa).

An EF-hand domain is found at 42-77 (CHFAHVKRIFKENDRHNQGRITTEDFRTIYRCIVHR). Residues 162 to 306 (QDMNKPLNDY…LKFKILVKNK (145 aa)) form the PI-PLC X-box domain. Catalysis depends on residues His177 and His222. The PI-PLC Y-box domain maps to 385–501 (LSDLVIYTKA…GYVLKPDFLR (117 aa)). A C2 domain is found at 501 to 625 (RDTTLGFNPN…KGYRRVPLFS (125 aa)).

Interacts via its C2 domain with PtdIns(3)P and, to a lesser extent, PtdIns(5)P in vitro. Requires Ca(2+) as cofactor.

Its subcellular location is the nucleus. The protein resides in the cytoplasm. It localises to the perinuclear region. The enzyme catalyses a 1,2-diacyl-sn-glycero-3-phospho-(1D-myo-inositol-4,5-bisphosphate) + H2O = 1D-myo-inositol 1,4,5-trisphosphate + a 1,2-diacyl-sn-glycerol + H(+). In terms of biological role, the production of the second messenger molecules diacylglycerol (DAG) and inositol 1,4,5-trisphosphate (IP3) is mediated by activated phosphatidylinositol-specific phospholipase C enzymes. In vitro, hydrolyzes PtdIns(4,5)P2 in a Ca(2+)-dependent manner. Triggers intracellular Ca(2+) oscillations in oocytes solely during M phase and is involved in inducing oocyte activation and initiating embryonic development up to the blastocyst stage. Is therefore a strong candidate for the egg-activating soluble sperm factor that is transferred from the sperm into the egg cytoplasm following gamete membrane fusion. May exert an inhibitory effect on phospholipase-C-coupled processes that depend on calcium ions and protein kinase C, including CFTR trafficking and function. This is 1-phosphatidylinositol 4,5-bisphosphate phosphodiesterase zeta-1 from Rattus norvegicus (Rat).